A 215-amino-acid chain; its full sequence is MSGPDAQTKMQFLFALRSRGVTEAAVLEAMEAVDRGLFLRGIFSERAYEDVPLPIACGQTISQPSVVGLMTQALQVNPRDTVLEVGTGSGYQAAILAKLARRVYTVDRHGRLVREARQVFQQMSLSNITSLVGDGSHGMPDQAPFDRIIVTAAAEDPPGPLLAQLKVGGIMVVPVGQSDAVQTLIRVRKTENGLEYDELRPVRFVPLLEGLGKDT.

Residue Ser-62 is part of the active site.

The protein belongs to the methyltransferase superfamily. L-isoaspartyl/D-aspartyl protein methyltransferase family.

It localises to the cytoplasm. It carries out the reaction [protein]-L-isoaspartate + S-adenosyl-L-methionine = [protein]-L-isoaspartate alpha-methyl ester + S-adenosyl-L-homocysteine. Its function is as follows. Catalyzes the methyl esterification of L-isoaspartyl residues in peptides and proteins that result from spontaneous decomposition of normal L-aspartyl and L-asparaginyl residues. It plays a role in the repair and/or degradation of damaged proteins. In Ruegeria sp. (strain TM1040) (Silicibacter sp.), this protein is Protein-L-isoaspartate O-methyltransferase.